The following is a 685-amino-acid chain: Methionine--tRNA ligase (685 aa).

The short motif at 12-22 is the 'HIGH' region element; that stretch reads PYANGSIHLGH. Zn(2+) is bound by residues C143, C146, C156, and C159. The short motif at 339–343 is the 'KMSKS' region element; sequence KMSKS. K342 provides a ligand contact to ATP. In terms of domain architecture, tRNA-binding spans 582–685; that stretch reads DFMKIDMRVA…AGAQPGDKVG (104 aa).

The protein belongs to the class-I aminoacyl-tRNA synthetase family. MetG type 1 subfamily. Homodimer. It depends on Zn(2+) as a cofactor.

It is found in the cytoplasm. The enzyme catalyses tRNA(Met) + L-methionine + ATP = L-methionyl-tRNA(Met) + AMP + diphosphate. Functionally, is required not only for elongation of protein synthesis but also for the initiation of all mRNA translation through initiator tRNA(fMet) aminoacylation. The chain is Methionine--tRNA ligase from Neisseria meningitidis serogroup A / serotype 4A (strain DSM 15465 / Z2491).